We begin with the raw amino-acid sequence, 177 residues long: Cytochrome c oxidase assembly protein CtaG (177 aa).

At 1–8 (MTQKAKNT) the chain is on the cytoplasmic side. A helical; Signal-anchor for type II membrane protein membrane pass occupies residues 9–29 (IYLLILIILSMLCLVYASVPL). The Periplasmic portion of the chain corresponds to 30-177 (YSIFCKVTGY…TFFKYKENTK (148 aa)).

The protein belongs to the COX11/CtaG family.

The protein localises to the cell inner membrane. In terms of biological role, exerts its effect at some terminal stage of cytochrome c oxidase synthesis, probably by being involved in the insertion of the copper B into subunit I. The chain is Cytochrome c oxidase assembly protein CtaG from Ehrlichia ruminantium (strain Welgevonden).